A 189-amino-acid polypeptide reads, in one-letter code: Potassium-transporting ATPase KdpC subunit (189 aa).

Residues 6-26 form a helical membrane-spanning segment; that stretch reads PAIMMVLVFTIICGGIYPAVV.

This sequence belongs to the KdpC family. As to quaternary structure, the system is composed of three essential subunits: KdpA, KdpB and KdpC.

The protein localises to the cell inner membrane. Its function is as follows. Part of the high-affinity ATP-driven potassium transport (or Kdp) system, which catalyzes the hydrolysis of ATP coupled with the electrogenic transport of potassium into the cytoplasm. This subunit acts as a catalytic chaperone that increases the ATP-binding affinity of the ATP-hydrolyzing subunit KdpB by the formation of a transient KdpB/KdpC/ATP ternary complex. This is Potassium-transporting ATPase KdpC subunit from Geobacter metallireducens (strain ATCC 53774 / DSM 7210 / GS-15).